The sequence spans 99 residues: Sarcosine oxidase subunit delta (99 aa).

Positions 6, 9, 59, and 63 each coordinate Zn(2+).

Belongs to the SoxD family. Heterotetramer composed of subunits alpha (SoxA), beta (SoxB), gamma (SoxG) and delta (SoxD).

The protein resides in the cytoplasm. The catalysed reaction is sarcosine + (6S)-5,6,7,8-tetrahydrofolate + O2 = (6R)-5,10-methylene-5,6,7,8-tetrahydrofolate + glycine + H2O2. The enzyme catalyses sarcosine + O2 + H2O = formaldehyde + glycine + H2O2. Inhibited by Zn(2+), Cu(2+), Cd(2+), Hg(2+), Ag(+), p-chloromercuribenzoate (p-CMB), iodoacetamide, N-ethylmaleimide, CN(-), o-phenanthroline and sodium lauryl sulfate. In terms of biological role, in the presence of tetrahydrofolate, catalyzes the oxidative demethylation of sarcosine to yield glycine, 5,10-methylenetetrahydrofolate and hydrogen peroxide. In the absence of tetrahydrofolate, catalyzes the oxidative demethylation of sarcosine to yield glycine, formaldehyde and hydrogen peroxide. Can also use N-methyl-L-alanine and N-ethyl-L-glycine. Is very specific for oxygen as an acceptor. This Corynebacterium sp. (strain U-96) protein is Sarcosine oxidase subunit delta.